Here is a 181-residue protein sequence, read N- to C-terminus: Inner membrane-spanning protein YciB (181 aa).

A run of 5 helical transmembrane segments spans residues 10 to 30 (LIIF…GALI), 50 to 70 (MHLI…VFHD), 72 to 92 (AFIK…LGVS), 118 to 138 (VTWY…YVAF), and 148 to 168 (FKVF…VFYL).

This sequence belongs to the YciB family.

The protein resides in the cell inner membrane. Functionally, plays a role in cell envelope biogenesis, maintenance of cell envelope integrity and membrane homeostasis. This is Inner membrane-spanning protein YciB from Shewanella sp. (strain ANA-3).